Consider the following 688-residue polypeptide: Elongation factor G (688 aa).

Residues 8-282 (EKTRNIGIIA…AVVDYLPAPC (275 aa)) form the tr-type G domain. GTP contacts are provided by residues 17 to 24 (AHIDAGKT), 81 to 85 (DTPGH), and 135 to 138 (NKMD).

The protein belongs to the TRAFAC class translation factor GTPase superfamily. Classic translation factor GTPase family. EF-G/EF-2 subfamily.

The protein resides in the cytoplasm. Functionally, catalyzes the GTP-dependent ribosomal translocation step during translation elongation. During this step, the ribosome changes from the pre-translocational (PRE) to the post-translocational (POST) state as the newly formed A-site-bound peptidyl-tRNA and P-site-bound deacylated tRNA move to the P and E sites, respectively. Catalyzes the coordinated movement of the two tRNA molecules, the mRNA and conformational changes in the ribosome. In Aster yellows witches'-broom phytoplasma (strain AYWB), this protein is Elongation factor G.